A 432-amino-acid chain; its full sequence is Ribosomal protein uS12 methylthiotransferase RimO (432 aa).

One can recognise an MTTase N-terminal domain in the interval 2 to 115; it reads IRVAVITLGC…LPEIINRVLK (114 aa). The [4Fe-4S] cluster site is built by Cys-11, Cys-47, Cys-78, Cys-151, Cys-155, and Cys-158. A Radical SAM core domain is found at 137–367; it reads EDGKPFAYLK…MLHQQSITRA (231 aa).

The protein belongs to the methylthiotransferase family. RimO subfamily. The cofactor is [4Fe-4S] cluster.

It is found in the cytoplasm. The catalysed reaction is L-aspartate(89)-[ribosomal protein uS12]-hydrogen + (sulfur carrier)-SH + AH2 + 2 S-adenosyl-L-methionine = 3-methylsulfanyl-L-aspartate(89)-[ribosomal protein uS12]-hydrogen + (sulfur carrier)-H + 5'-deoxyadenosine + L-methionine + A + S-adenosyl-L-homocysteine + 2 H(+). Its function is as follows. Catalyzes the methylthiolation of an aspartic acid residue of ribosomal protein uS12. In Moorella thermoacetica (strain ATCC 39073 / JCM 9320), this protein is Ribosomal protein uS12 methylthiotransferase RimO.